The chain runs to 247 residues: Mannose-P-dolichol utilization defect 1 protein (247 aa).

An N-acetylalanine modification is found at alanine 2. Residues 39–105 (KILLSKGLGL…NNFPFSSWGE (67 aa)) form the PQ-loop 1 domain. A run of 7 helical transmembrane segments spans residues 46–66 (LGLGIVAGSLLVKLPQIFKIL), 74–94 (LSLQSVMLELVALTGTVIYSI), 103–123 (WGEALFLTLQTITICLLVLHY), 128–145 (VKGVALLACYATLLLALL), 151–171 (LAVVTMLQASNVPAVVVGKLL), 185–205 (LSAITVFMLFGGSLARIFTSV), and 213–233 (MAGVFVVSSLCNGLIAAQVLF). The PQ-loop 2 domain occupies 159 to 216 (ASNVPAVVVGKLLQAATNYHNGHTGQLSAITVFMLFGGSLARIFTSVQETGDPLMAGV).

This sequence belongs to the MPDU1 (TC 2.A.43.3) family.

Its subcellular location is the membrane. Functionally, required for normal utilization of mannose-dolichol phosphate (Dol-P-Man) in the synthesis of N-linked and O-linked oligosaccharides and GPI anchors. In Cricetulus griseus (Chinese hamster), this protein is Mannose-P-dolichol utilization defect 1 protein (MPDU1).